Consider the following 1087-residue polypeptide: Apoptosis-stimulating of p53 protein 1 (1087 aa).

A disordered region spans residues 82 to 122; sequence HEDSPTESSEQGARQTQEQRTQRSVVNVPGEKRTENGVGNP. Polar residues predominate over residues 87–106; that stretch reads TESSEQGARQTQEQRTQRSV. Phosphoserine occurs at positions 332 and 335. 3 disordered regions span residues 374–415, 442–721, and 734–878; these read SSAA…GMEG, IGKG…PNIQ, and GMEG…TGHG. Residues 393–405 are compositionally biased toward polar residues; the sequence is KQNSASVKSTQMT. The segment covering 445 to 458 has biased composition (pro residues); that stretch reads GPPPIPGVGKPLPP. Positions 459 to 476 are enriched in low complexity; the sequence is SYGTYPSSGPLGPGSTSS. Positions 506–520 are enriched in polar residues; that stretch reads NAPQPGSSQQIQQRI. Pro residues predominate over residues 523–536; it reads PPSPTYPPAGPPAF. The residue at position 552 (Arg552) is an Asymmetric dimethylarginine. Polar residues predominate over residues 570 to 589; the sequence is QTVNSSSIYSMYLQQATPPK. Low complexity predominate over residues 610 to 625; sequence PVLPSGSASPSPLPFL. Phosphoserine occurs at positions 679 and 708. Positions 805–831 are enriched in polar residues; sequence PQTTHQTAEPTEDNNNNVAPVPSTEQI. ANK repeat units follow at residues 917–949 and 950–982; these read EGIT…AADS and DGWT…ASTI. Residues 1016 to 1078 form the SH3 domain; sequence MNKGTVYALW…PKNLLGLYPR (63 aa).

The protein belongs to the ASPP family. As to quaternary structure, interacts with P53/TP53; the interaction promotes pro-apoptotic activity.

It is found in the cytoplasm. The protein resides in the nucleus. Functionally, regulator that plays a central role in regulation of apoptosis via its interaction with p53/TP53. Regulates TP53 by enhancing the DNA binding and transactivation function of TP53 on the promoters of proapoptotic genes in vivo. The sequence is that of Apoptosis-stimulating of p53 protein 1 (Ppp1r13b) from Mus musculus (Mouse).